The primary structure comprises 50 residues: uncharacterized protein (50 aa).

This is an uncharacterized protein from Dryophytes versicolor (chameleon treefrog).